Reading from the N-terminus, the 777-residue chain is DNA repair helicase/translocase XPB-R (777 aa).

Positions 212–416 (AASDGALRSG…DLFHLVGPKL (205 aa)) constitute a Helicase ATP-binding domain. Residue 225–232 (LPCGSGKT) participates in ATP binding. The short motif at 369 to 372 (DEVH) is the DEVH box element. Positions 484–631 (IVKRHVAESS…GYTCSVTEFN (148 aa)) constitute a Helicase C-terminal domain.

This sequence belongs to the helicase family. RAD25/XPB subfamily.

The catalysed reaction is Couples ATP hydrolysis with the unwinding of duplex DNA by translocating in the 3'-5' direction.. The enzyme catalyses ATP + H2O = ADP + phosphate + H(+). In terms of biological role, ATP-dependent 3'-5' DNA helicase/translocase; binds dsDNA rather than ssDNA, unzipping it in a translocase rather than classical helicase activity. Involved in nucleotide excision repair (NER) of damaged DNA. XPB-R is a paralog of XBP, but is not a component of the TFIIH basal transcription factor and is dispensable for RNA polymerase II transcription. The protein is DNA repair helicase/translocase XPB-R of Trypanosoma brucei brucei (strain 927/4 GUTat10.1).